Consider the following 81-residue polypeptide: Defensin-like protein 115 (81 aa).

Positions 1–24 are cleaved as a signal peptide; the sequence is MAITKKMLVVFLLAFLFVTSSVHC. 4 cysteine pairs are disulfide-bonded: cysteine 40–cysteine 78, cysteine 46–cysteine 69, cysteine 54–cysteine 76, and cysteine 58–cysteine 77.

Belongs to the DEFL family.

The protein localises to the secreted. This is Defensin-like protein 115 from Arabidopsis thaliana (Mouse-ear cress).